Here is a 239-residue protein sequence, read N- to C-terminus: Purine nucleoside phosphorylase DeoD-type (239 aa).

An a purine D-ribonucleoside-binding site is contributed by H5. Residues G21, R25, R44, and 88–91 (RVGS) contribute to the phosphate site. A purine D-ribonucleoside is bound by residues 180–182 (EME) and 204–205 (SD). The active-site Proton donor is D205.

It belongs to the PNP/UDP phosphorylase family. In terms of assembly, homohexamer; trimer of homodimers.

It carries out the reaction a purine D-ribonucleoside + phosphate = a purine nucleobase + alpha-D-ribose 1-phosphate. The catalysed reaction is a purine 2'-deoxy-D-ribonucleoside + phosphate = a purine nucleobase + 2-deoxy-alpha-D-ribose 1-phosphate. Functionally, catalyzes the reversible phosphorolytic breakdown of the N-glycosidic bond in the beta-(deoxy)ribonucleoside molecules, with the formation of the corresponding free purine bases and pentose-1-phosphate. This is Purine nucleoside phosphorylase DeoD-type from Salmonella agona (strain SL483).